Here is a 586-residue protein sequence, read N- to C-terminus: A-type ATP synthase subunit A (586 aa).

Residue 232–239 coordinates ATP; it reads GPFGSGKT.

This sequence belongs to the ATPase alpha/beta chains family. As to quaternary structure, has multiple subunits with at least A(3), B(3), C, D, E, F, H, I and proteolipid K(x).

The protein resides in the cell membrane. It catalyses the reaction ATP + H2O + 4 H(+)(in) = ADP + phosphate + 5 H(+)(out). In terms of biological role, component of the A-type ATP synthase that produces ATP from ADP in the presence of a proton gradient across the membrane. The A chain is the catalytic subunit. The protein is A-type ATP synthase subunit A of Methanococcus maripaludis (strain C7 / ATCC BAA-1331).